The primary structure comprises 512 residues: tRNA-guanine(15) transglycosylase (512 aa).

Catalysis depends on Asp85, which acts as the Nucleophile. Position 120 (Asp120) interacts with substrate. Residues Cys272, Cys274, and Cys277 each coordinate Zn(2+).

The protein belongs to the archaeosine tRNA-ribosyltransferase family. Zn(2+) serves as cofactor.

It catalyses the reaction guanosine(15) in tRNA + 7-cyano-7-deazaguanine = 7-cyano-7-carbaguanosine(15) in tRNA + guanine. The protein operates within tRNA modification; archaeosine-tRNA biosynthesis. Functionally, exchanges the guanine residue with 7-cyano-7-deazaguanine (preQ0) at position 15 in the dihydrouridine loop (D-loop) of archaeal tRNAs. The polypeptide is tRNA-guanine(15) transglycosylase (Aeropyrum pernix (strain ATCC 700893 / DSM 11879 / JCM 9820 / NBRC 100138 / K1)).